A 1325-amino-acid polypeptide reads, in one-letter code: Sperm-specific sodium:proton exchanger (1325 aa).

The N-terminal stretch at 1–29 is a signal peptide; that stretch reads MKKRVVKLRELVPAVAALAVAVLIQSATG. Positions 28 to 68 are disordered; that stretch reads TGSSGGSGHTPTTQATHADDHDLTTHNGTEEHDDGHDDGHD. Residues 30–76 lie on the Extracellular side of the membrane; sequence SSGGSGHTPTTQATHADDHDLTTHNGTEEHDDGHDDGHDDLHAHAPK. Positions 44 to 68 are enriched in basic and acidic residues; that stretch reads HADDHDLTTHNGTEEHDDGHDDGHD. Residue histidine 73 coordinates a 1,2-diacylglycero-3-phosphate. A helical membrane pass occupies residues 77 to 96; that stretch reads VIVFISGSCLFGAISRSLFK. Topologically, residues 97–101 are cytoplasmic; it reads KLPIP. Residues 102-119 traverse the membrane as a helical segment; that stretch reads YTVVLLILGAILGVVASN. Residues 120-135 lie on the Extracellular side of the membrane; sequence VPLVEEHTRDVAHMDP. The chain crosses the membrane as a helical span at residues 136–152; it reads HVLLQIFLPVLIFESAF. Over 153-162 the chain is Cytoplasmic; the sequence is AMDVHTFMRS. A helical transmembrane segment spans residues 163–188; it reads FSQVCILALFGLVVASVLTAVLAMNL. The segment at 163–250 is transport core domain; sequence FSQVCILALF…AIVIFNVFMK (88 aa). Residues 189–194 lie on the Extracellular side of the membrane; the sequence is FNYNWN. Residues 195–220 form a helical membrane-spanning segment; sequence FSEAMMFGAIMSATDPVAVVALLKDL. Residues 221 to 223 lie on the Cytoplasmic side of the membrane; the sequence is GAS. Residues 224–249 traverse the membrane as a helical segment; that stretch reads KQLGTIIEGESLLNDGCAIVIFNVFM. The Essential for sodium:proton exchange signature appears at 237-238; the sequence is ND. The Extracellular portion of the chain corresponds to 250-260; sequence KMVFFPQLTST. The chain crosses the membrane as a helical span at residues 261 to 292; it reads VGQNVLYFLQVAVAGPLWGYAVAKVTVFFLSH. The Cytoplasmic segment spans residues 293 to 296; that stretch reads IFND. Residues 297 to 319 traverse the membrane as a helical segment; that stretch reads ALVEITITLAATYLTYYIGDIWL. The Extracellular portion of the chain corresponds to 320 to 322; that stretch reads EVS. Residues 323–336 form a helical membrane-spanning segment; sequence GVLAVVVLGLIVNA. The Cytoplasmic portion of the chain corresponds to 337–343; that stretch reads EKTSISP. Residues 344–377 form a helical membrane-spanning segment; that stretch reads EVEVFLHRFWEMLAYLANTLIFMMVGVVVTQKAL. Over 378–382 the chain is Extracellular; that stretch reads VAVDK. Residues 383-412 traverse the membrane as a helical segment; sequence MDWFYLIILYLAITIIRGMVISLFSPILSR. A transport core domain region spans residues 383 to 481; that stretch reads MDWFYLIILY…TTIQTLLRIL (99 aa). The Cytoplasmic segment spans residues 413-418; it reads IGYGLT. A helical membrane pass occupies residues 419-446; sequence WRNAVIMTWGGLRGAVGLALALVVENLA. Over 447-450 the chain is Extracellular; that stretch reads GNDV. A helical membrane pass occupies residues 451–481; it reads IGSKFLFHTAGIVVLTLVINATTIQTLLRIL. Residues 482–677 are Cytoplasmic-facing; that stretch reads GMSDISIPKR…GKLMYKICHH (196 aa). An interacts with the S4 segment of voltage sensor domain region spans residues 575 to 620; sequence FADMMEEARLRMLKAEKISYWKQFEHGMLAREALRLLVQHAEVAAD. The interval 605–620 is interacts with the transport core domain; can lock the transporter in the inward conformation; the sequence is REALRLLVQHAEVAAD. A helical membrane pass occupies residues 678–708; sequence MAFEVTINIAIVLNIVPIIMEFVVQDKMASV. The Extracellular segment spans residues 709–724; that stretch reads STMAAPGSTVSSEPSS. A helical transmembrane segment spans residues 725–752; the sequence is LQKIEDALRISNYVFFVIYAIEAIVKIL. Topologically, residues 753–760 are cytoplasmic; that stretch reads GLGRHYIV. Residues 761–784 form a helical membrane-spanning segment; the sequence is SHWNKFDAFILVVALVDIIIAETL. The Extracellular portion of the chain corresponds to 785 to 795; sequence LKGSITINLSS. The chain crosses the membrane as a helical span at residues 796 to 822; sequence IKVVKLFRLLRGLRMLRLTKALIPKLI. The S4 segment of voltage sensor domain stretch occupies residues 796-857; the sequence is IKVVKLFRLL…EEVGKIIDRM (62 aa). Residues 823-1325 lie on the Cytoplasmic side of the membrane; it reads LVVNGKINNQ…EEGAAPRVNV (503 aa). The tract at residues 860–919 is interacts with the S4 segment of voltage sensor domain; the sequence is NKKILRELKHISETGRLQVVKELGLLQREHPGIAVSVKTRQAIRTILNHSRETIHELQGA. The interval 968 to 1068 is cNMP-binding domain; the sequence is KLIDFIKARA…CETTVQVYFI (101 aa). Residue glycine 1043 participates in 3',5'-cyclic AMP binding. Residues glycine 1043, glutamate 1044, and methionine 1045 each contribute to the 3',5'-cyclic GMP site. 4 residues coordinate 3',5'-cyclic AMP: methionine 1045, glycine 1046, arginine 1053, and asparagine 1054. The 3',5'-cyclic GMP site is built by arginine 1053 and asparagine 1054. Residues 1237–1325 form a disordered region; the sequence is MLSRKSSGAA…EEGAAPRVNV (89 aa). The segment covering 1266–1280 has biased composition (low complexity); it reads VSPSVPTKTTPKPKS.

It belongs to the monovalent cation:proton antiporter 1 (CPA1) transporter (TC 2.A.36) family. Homodimer; the dimerization is stabilized in the presence of phosphatidic acids.

It is found in the cell projection. It localises to the cilium. The protein resides in the flagellum membrane. The catalysed reaction is Na(+)(in) + H(+)(out) = Na(+)(out) + H(+)(in). With respect to regulation, gated by voltage and stimulated by cyclic nucleotides which shift the activation voltage closer to resting membrane potential. Not inhibited by common sodium:proton exchanger inhibitors such as amiloride. Electroneutral sodium:proton antiporter that regulates intracellular pH of sperm along with capacitation and fertility. Activated in response to egg-derived chemoattractants, couples membrane voltage to sodium:proton exchange and transduces membrane hyperpolarization to cytoplasmic alkalization to cAMP signaling and ultimately to sperm motility. This Strongylocentrotus purpuratus (Purple sea urchin) protein is Sperm-specific sodium:proton exchanger.